The sequence spans 270 residues: uncharacterized protein (270 aa).

It localises to the virion. This is an uncharacterized protein from Acanthamoeba polyphaga (Amoeba).